The chain runs to 101 residues: Large ribosomal subunit protein uL23 (101 aa).

It belongs to the universal ribosomal protein uL23 family. Part of the 50S ribosomal subunit. Contacts protein L29, and trigger factor when it is bound to the ribosome.

Functionally, one of the early assembly proteins it binds 23S rRNA. One of the proteins that surrounds the polypeptide exit tunnel on the outside of the ribosome. Forms the main docking site for trigger factor binding to the ribosome. This Kocuria rhizophila (strain ATCC 9341 / DSM 348 / NBRC 103217 / DC2201) protein is Large ribosomal subunit protein uL23.